The sequence spans 286 residues: 2-hydroxy-6-oxo-6-phenylhexa-2,4-dienoate hydrolase (286 aa).

The AB hydrolase-1 domain occupies 36-271 (VIMLHGGGPG…KCGHWAQWEH (236 aa)). Substrate-binding positions include 42 to 43 (GG), asparagine 51, asparagine 111, serine 180, and arginine 190. Histidine 265 serves as the catalytic Proton acceptor. Tryptophan 266 provides a ligand contact to substrate.

This sequence belongs to the AB hydrolase superfamily. BphD family. Homodimer.

It carries out the reaction 2,6-dioxo-6-phenylhexa-3-enoate + H2O = 2-oxopent-4-enoate + benzoate + H(+). The protein operates within xenobiotic degradation; biphenyl degradation; 2-hydroxy-2,4-pentadienoate and benzoate from biphenyl: step 4/4. Catalyzes an unusual C-C bond hydrolysis of 2-hydroxy-6-oxo-6-phenylhexa-2,4-dienoic acid (HOPDA) to produce benzoic acid and 2-hydroxy-2,4-pentadienoic acid (HPD). The polypeptide is 2-hydroxy-6-oxo-6-phenylhexa-2,4-dienoate hydrolase (bphD) (Metapseudomonas furukawaii (Pseudomonas furukawaii)).